We begin with the raw amino-acid sequence, 189 residues long: Elongation factor P (189 aa).

The protein belongs to the elongation factor P family.

The protein localises to the cytoplasm. The protein operates within protein biosynthesis; polypeptide chain elongation. Functionally, involved in peptide bond synthesis. Stimulates efficient translation and peptide-bond synthesis on native or reconstituted 70S ribosomes in vitro. Probably functions indirectly by altering the affinity of the ribosome for aminoacyl-tRNA, thus increasing their reactivity as acceptors for peptidyl transferase. The protein is Elongation factor P of Campylobacter jejuni subsp. doylei (strain ATCC BAA-1458 / RM4099 / 269.97).